We begin with the raw amino-acid sequence, 680 residues long: MSNLSLFDDVSAEIAQLREQIRYHNYRYYALDEPQIPDAEYDRLMQRLRELEAQYPASVTPDSPTQRVGAAPLSAFQTVEHQIPMLSLDNAFEEADVIAFNQRILDRLKSTENIEYACELKLDGLAVSLLYRDGVLVRGATRGDGSKGEDITQNLRTIASVPLKLLGEGYPAVLEVRGEVYMPKAGFNALNEKARSTGEKLFVNPRNAAAGALRQLDSRITASRPLEMCAYSVGLVEGGELPGTHTGILAALKSWGFLTNKETATASTIADCIAFYQSIQARRDSLAYDIDGIVFKVNARELQESLGFISRAPRWAIAYKFPAQEEMTVLQDVEFQVGRTGAVTPVARLQPVFVGGVTVSNATLHNRDEIQRLGIMIGDTVIVRRAGDVIPQIVQVVESRRPTDARPVLFPDHCPVCGSPVETLEDEAIARCSGGLVCAAQRKEAIKHFASRKALDVEGLGDKLVEQLVDTGLVSKLADIYQLTGEQLAAMERMGEKSADNLLQALEASKHTTLAKFIYALGIREIGEATARNLANHFGSLEKLAEADEETLVQVNDVGPVGAHFVAEFFAQESNRQAVADLRAAGIHWQDLDVSTIEDLPLKGLTYVLTGTLEVMSRDDAKAHLLALGAKVAGSVSAKTDYVVAGPGAGSKLQKARELNLNVMDEEALLDLLRKHGRLE.

Residues 38-42 (DAEYD), 87-88 (SL), and E119 contribute to the NAD(+) site. The N6-AMP-lysine intermediate role is filled by K121. NAD(+) is bound by residues R142, E179, K296, and K320. Positions 414, 417, 432, and 438 each coordinate Zn(2+). The BRCT domain occupies 597–680 (IEDLPLKGLT…DLLRKHGRLE (84 aa)).

This sequence belongs to the NAD-dependent DNA ligase family. LigA subfamily. Mg(2+) is required as a cofactor. Mn(2+) serves as cofactor.

It catalyses the reaction NAD(+) + (deoxyribonucleotide)n-3'-hydroxyl + 5'-phospho-(deoxyribonucleotide)m = (deoxyribonucleotide)n+m + AMP + beta-nicotinamide D-nucleotide.. Functionally, DNA ligase that catalyzes the formation of phosphodiester linkages between 5'-phosphoryl and 3'-hydroxyl groups in double-stranded DNA using NAD as a coenzyme and as the energy source for the reaction. It is essential for DNA replication and repair of damaged DNA. This is DNA ligase from Cellvibrio japonicus (strain Ueda107) (Pseudomonas fluorescens subsp. cellulosa).